The primary structure comprises 483 residues: MHLDQLLQNIPAKIYGKVESIPVRNLTRDSRCVGVGDIFIARQGQFCNGNDYSSQAVANGAIAVLSSLYNPFLSVVQIIAEDPIALEASLAARFYNNPSRHLDVIGITGTNGKTTVSCLVRELMERSGRRTGLIGTIEHILGENRIIDSFTTPDAILLQKYFAEMVKQNLSAAVMEVSSIGMALGRVRETEFLAGVLTNITSDHLDFHGSLEEYIAAKKQFFASLPEKGIAVVNLDCEYAPSFLNGSQARAVSYAIHQEADYRADRLKLYSSGSSYDIWYQGQVFPCETSLIGEHNVYNVLASLAVVHQFLGRDFADLVRDVRFLSAPKGRLDPILLGPFPVYIDYAHTPDALDNVCRILLQLLPKDGRLIIVFGCGGDRDRVKRPLMAKVSEHYGFSFVTSDNPRTEDPDQIIADICKGFSTDHYVVESDRKLAIEKAISMASDKDIVLVAGKGHEGYQIFKHQTIVFDDREVVCEALAALC.

Serine 30 is a UDP-N-acetyl-alpha-D-muramoyl-L-alanyl-D-glutamate binding site. 109-115 (GTNGKTT) lines the ATP pocket. Residues 151–152 (TT), serine 178, and arginine 186 each bind UDP-N-acetyl-alpha-D-muramoyl-L-alanyl-D-glutamate. Position 218 is an N6-carboxylysine (lysine 218). Residues arginine 380, 403-406 (DNPR), glycine 453, and glutamate 457 contribute to the meso-2,6-diaminopimelate site. A Meso-diaminopimelate recognition motif motif is present at residues 403–406 (DNPR).

This sequence belongs to the MurCDEF family. MurE subfamily. It depends on Mg(2+) as a cofactor. Carboxylation is probably crucial for Mg(2+) binding and, consequently, for the gamma-phosphate positioning of ATP.

It is found in the cytoplasm. The enzyme catalyses UDP-N-acetyl-alpha-D-muramoyl-L-alanyl-D-glutamate + meso-2,6-diaminopimelate + ATP = UDP-N-acetyl-alpha-D-muramoyl-L-alanyl-gamma-D-glutamyl-meso-2,6-diaminopimelate + ADP + phosphate + H(+). It functions in the pathway cell wall biogenesis; peptidoglycan biosynthesis. Its function is as follows. Catalyzes the addition of meso-diaminopimelic acid to the nucleotide precursor UDP-N-acetylmuramoyl-L-alanyl-D-glutamate (UMAG) in the biosynthesis of bacterial cell-wall peptidoglycan. In Chlamydia trachomatis serovar A (strain ATCC VR-571B / DSM 19440 / HAR-13), this protein is UDP-N-acetylmuramoyl-L-alanyl-D-glutamate--2,6-diaminopimelate ligase.